Reading from the N-terminus, the 249-residue chain is Type-1Aa cytolytic delta-endotoxin (249 aa).

The protein belongs to the cyt1/cyt2 endotoxin family. Active after proteolytic processing.

Kills the larvae of dipteran insects by making pores in the epithelial cell membrane of the insect midgut. Acts on mosquitos and black flies. The sequence is that of Type-1Aa cytolytic delta-endotoxin (cyt1Aa) from Bacillus thuringiensis subsp. morrisoni.